Reading from the N-terminus, the 282-residue chain is Energy-coupling factor transporter ATP-binding protein EcfA2 (282 aa).

The region spanning Met-1–Asp-234 is the ABC transporter domain. Position 28–35 (Gly-28–Ser-35) interacts with ATP.

This sequence belongs to the ABC transporter superfamily. Energy-coupling factor EcfA family. In terms of assembly, forms a stable energy-coupling factor (ECF) transporter complex composed of 2 membrane-embedded substrate-binding proteins (S component), 2 ATP-binding proteins (A component) and 2 transmembrane proteins (T component).

Its subcellular location is the cell membrane. ATP-binding (A) component of a common energy-coupling factor (ECF) ABC-transporter complex. Unlike classic ABC transporters this ECF transporter provides the energy necessary to transport a number of different substrates. The polypeptide is Energy-coupling factor transporter ATP-binding protein EcfA2 (Halalkalibacterium halodurans (strain ATCC BAA-125 / DSM 18197 / FERM 7344 / JCM 9153 / C-125) (Bacillus halodurans)).